The primary structure comprises 124 residues: Small ribosomal subunit protein uS13 (124 aa).

The tract at residues 91–124 is disordered; it reads HRKGLPVNGQNTRNNARTRKGKPKAVTGKKQAGK.

It belongs to the universal ribosomal protein uS13 family. Part of the 30S ribosomal subunit. Forms a loose heterodimer with protein S19. Forms two bridges to the 50S subunit in the 70S ribosome.

Functionally, located at the top of the head of the 30S subunit, it contacts several helices of the 16S rRNA. In the 70S ribosome it contacts the 23S rRNA (bridge B1a) and protein L5 of the 50S subunit (bridge B1b), connecting the 2 subunits; these bridges are implicated in subunit movement. Contacts the tRNAs in the A and P-sites. The protein is Small ribosomal subunit protein uS13 of Acholeplasma laidlawii (strain PG-8A).